A 918-amino-acid polypeptide reads, in one-letter code: Plasma membrane ATPase 1 (918 aa).

Residues 1-18 (MTDTSSSSSSSSASSVSA) are compositionally biased toward low complexity. A disordered region spans residues 1–84 (MTDTSSSSSS…VPEEYLQTDP (84 aa)). The Cytoplasmic segment spans residues 1–115 (MTDTSSSSSS…ADEKESLVVK (115 aa)). A compositionally biased stretch (acidic residues) spans 33 to 47 (AASESSDDDDIDALI). Ser-61 is subject to Phosphoserine. A helical membrane pass occupies residues 116–136 (FVMFFVGPIQFVMEAAAILAA). Residues 137–140 (GLSD) lie on the Extracellular side of the membrane. The helical transmembrane segment at 141–160 (WVDFGVICGLLMLNAGVGFV) threads the bilayer. Topologically, residues 161–291 (QEFQAGSIVD…GQGHFTEVLN (131 aa)) are cytoplasmic. Thr-175 bears the Phosphothreonine mark. Lys-252 participates in a covalent cross-link: Glycyl lysine isopeptide (Lys-Gly) (interchain with G-Cter in ubiquitin). The chain crosses the membrane as a helical span at residues 292 to 313 (GIGIILLVLVIATLLLVWTACF). At 314–325 (YRTNGIVRILRY) the chain is on the extracellular side. The chain crosses the membrane as a helical span at residues 326–347 (TLGITIIGVPVGLPAVVTTTMA). Over 348–719 (VGAAYLAKKQ…IAILDNSLDI (372 aa)) the chain is Cytoplasmic. The active-site 4-aspartylphosphate intermediate is Asp-378. Lys-555 is covalently cross-linked (Glycyl lysine isopeptide (Lys-Gly) (interchain with G-Cter in ubiquitin)). Residues Asp-634 and Asp-638 each contribute to the Mg(2+) site. The helical transmembrane segment at 720–738 (DLIVFIAIFADVATLAIAY) threads the bilayer. Residues 739 to 754 (DNAPYSPKPVKWNLPR) lie on the Extracellular side of the membrane. Residues 755-774 (LWGMSIILGIVLAIGSWITL) traverse the membrane as a helical segment. The Cytoplasmic portion of the chain corresponds to 775-824 (TTMFLPKGGIIQNFGAMNGIMFLQISLTENWLIFITRAAGPFWSSIPSWQ). Residues 825 to 845 (LAGAVFAVDIIATMFTLFGWW) form a helical membrane-spanning segment. At 846–857 (SENWTDIVTVVR) the chain is on the extracellular side. A helical membrane pass occupies residues 858–874 (VWIWSIGIFCVLGGFYY). The Cytoplasmic portion of the chain corresponds to 875–918 (EMSTSEAFDRLMNGKPMKEKKSTRSVEDFMAAMQRVSTQHEKET). Ser-911 is modified (phosphoserine). Phosphothreonine occurs at positions 912 and 918.

The protein belongs to the cation transport ATPase (P-type) (TC 3.A.3) family. Type IIIA subfamily. In terms of assembly, interacts with its cargot receptor EXP1 for its transport within the cell and maturation. Post-translationally, phosphorylated on multiple Ser and Thr residues.

The protein resides in the cell membrane. The enzyme catalyses ATP + H2O + H(+)(in) = ADP + phosphate + 2 H(+)(out). The plasma membrane ATPase of plants and fungi is a hydrogen ion pump. The proton gradient it generates drives the active transport of nutrients by H(+)-symport. The resulting external acidification and/or internal alkinization may mediate growth responses. In Saccharomyces cerevisiae (strain ATCC 204508 / S288c) (Baker's yeast), this protein is Plasma membrane ATPase 1 (PMA1).